Consider the following 131-residue polypeptide: D-ribose pyranase (131 aa).

His20 acts as the Proton donor in catalysis. Residues Asp28, His98, and 120–122 (YAN) contribute to the substrate site.

The protein belongs to the RbsD / FucU family. RbsD subfamily. Homodecamer.

Its subcellular location is the cytoplasm. It carries out the reaction beta-D-ribopyranose = beta-D-ribofuranose. The protein operates within carbohydrate metabolism; D-ribose degradation; D-ribose 5-phosphate from beta-D-ribopyranose: step 1/2. In terms of biological role, catalyzes the interconversion of beta-pyran and beta-furan forms of D-ribose. This chain is D-ribose pyranase, found in Bacillus cereus (strain ATCC 10987 / NRS 248).